The primary structure comprises 646 residues: Vitamin K-dependent protein S (646 aa).

Positions 1–12 (GHASQVLVRKRR) are excised as a propeptide. The Gla domain maps to 13–58 (ANSMLEETKKGNLERECIEELCNKEEAREVFENDPETDYFYPKYLG). Residues glutamate 18, glutamate 19, glutamate 26, glutamate 28, glutamate 31, glutamate 32, glutamate 37, glutamate 38, glutamate 41, glutamate 44, and glutamate 48 each carry the 4-carboxyglutamate modification. Cysteine 29 and cysteine 34 are joined by a disulfide. The thrombin-sensitive stretch occupies residues 59–87 (CLGSFRAKLFTATRRSANGYPDLRSCVNA). Residues 88 to 126 (IPDQCNPLPCSEEGYLNCKDGQATFTCICKPGWQGEKCE) enclose the EGF-like 1 domain. 13 cysteine pairs are disulfide-bonded: cysteine 92–cysteine 105, cysteine 97–cysteine 114, cysteine 116–cysteine 125, cysteine 132–cysteine 146, cysteine 142–cysteine 155, cysteine 157–cysteine 170, cysteine 176–cysteine 188, cysteine 183–cysteine 197, cysteine 199–cysteine 212, cysteine 218–cysteine 227, cysteine 223–cysteine 236, cysteine 238–cysteine 253, and cysteine 420–cysteine 446. The residue at position 107 (aspartate 107) is a (3R)-3-hydroxyaspartate. The EGF-like 2; calcium-binding domain occupies 128 to 171 (DINECKDPTNINGGCSQICDNTAGSYHCSCKSGFVMLANEKDCK). An EGF-like 3; calcium-binding domain is found at 172-213 (DMDECSVKPSVCGTAVCKNTPGDFECECSEGYRYNPTAKSCE). Positions 214–254 (DIDECSENMCAQLCVNYPGGYSCYCDGKKGFKLAQDKKSCE) constitute an EGF-like 4; calcium-binding domain. Laminin G-like domains follow at residues 270–446 (LLYL…KKHC) and 455–636 (YYPG…AHSC). 2 N-linked (GlcNAc...) asparagine glycosylation sites follow: asparagine 470 and asparagine 480. A disulfide bond links cysteine 609 and cysteine 636.

As to quaternary structure, interacts with C4b-binding protein, a regulator of the complex system. In rabbit plasma however, protein S appears to be present only in free form. The iron and 2-oxoglutarate dependent 3-hydroxylation of aspartate and asparagine is (R) stereospecific within EGF domains. Plasma.

It localises to the secreted. Functionally, anticoagulant plasma protein; it is a cofactor to activated protein C in the degradation of coagulation factors Va and VIIIa. It helps to prevent coagulation and stimulating fibrinolysis. This chain is Vitamin K-dependent protein S (PROS1), found in Oryctolagus cuniculus (Rabbit).